The following is a 630-amino-acid chain: Protein mono-ADP-ribosyltransferase PARP6 (630 aa).

The residue at position 237 (Cys237) is an ADP-ribosylcysteine. Residues 394 to 620 enclose the PARP catalytic domain; sequence EMTQGSYLEI…QDPKIQKEIM (227 aa). The residue at position 600 (Asp600) is an ADP-ribosyl aspartic acid.

The protein belongs to the ARTD/PARP family. Post-translationally, auto-mono-ADP-ribosylated.

It carries out the reaction L-aspartyl-[protein] + NAD(+) = 4-O-(ADP-D-ribosyl)-L-aspartyl-[protein] + nicotinamide. It catalyses the reaction L-cysteinyl-[protein] + NAD(+) = S-(ADP-D-ribosyl)-L-cysteinyl-[protein] + nicotinamide + H(+). Functionally, mono-ADP-ribosyltransferase that mediates mono-ADP-ribosylation of target proteins. The sequence is that of Protein mono-ADP-ribosyltransferase PARP6 from Homo sapiens (Human).